Reading from the N-terminus, the 473-residue chain is DNA gyrase subunit A (473 aa).

The region spanning Met1 to Arg473 is the Topo IIA-type catalytic domain. The O-(5'-phospho-DNA)-tyrosine intermediate role is filled by Tyr49. In terms of domain architecture, DOD-type homing endonuclease spans Leu175 to Ile315.

This sequence belongs to the type II topoisomerase GyrA/ParC subunit family. As to quaternary structure, heterotetramer, composed of two GyrA and two GyrB chains. In the heterotetramer, GyrA contains the active site tyrosine that forms a transient covalent intermediate with DNA, while GyrB binds cofactors and catalyzes ATP hydrolysis. Post-translationally, this protein undergoes a protein self splicing that involves a post-translational excision of the intervening region (intein) followed by peptide ligation.

It localises to the cytoplasm. It carries out the reaction ATP-dependent breakage, passage and rejoining of double-stranded DNA.. Its function is as follows. A type II topoisomerase that negatively supercoils closed circular double-stranded (ds) DNA in an ATP-dependent manner to modulate DNA topology and maintain chromosomes in an underwound state. Negative supercoiling favors strand separation, and DNA replication, transcription, recombination and repair, all of which involve strand separation. Also able to catalyze the interconversion of other topological isomers of dsDNA rings, including catenanes and knotted rings. Type II topoisomerases break and join 2 DNA strands simultaneously in an ATP-dependent manner. This is DNA gyrase subunit A (gyrA) from Mycobacterium malmoense.